The primary structure comprises 574 residues: Frizzled and smoothened-like protein G (574 aa).

Residues Met1–Gly19 form the signal peptide. The Extracellular portion of the chain corresponds to Leu20 to Ser246. The 152-residue stretch at Asp30–Pro181 folds into the FZ domain. Disulfide bonds link Cys35–Cys109, Cys48–Cys102, Cys91–Cys138, and Cys127–Cys178. Residues Asn119, Asn161, Asn187, Asn206, Asn233, and Asn244 are each glycosylated (N-linked (GlcNAc...) asparagine). Residues Lys247–Leu267 form a helical membrane-spanning segment. Topologically, residues Lys268 to Lys273 are cytoplasmic. A helical membrane pass occupies residues Tyr274–Ile294. Topologically, residues Lys295–Ala324 are extracellular. The chain crosses the membrane as a helical span at residues Ala325–Leu345. At Tyr346–Arg358 the chain is on the cytoplasmic side. Residues Tyr359–Ser379 form a helical membrane-spanning segment. Residues Lys380 to Leu401 are Extracellular-facing. A helical membrane pass occupies residues Phe402 to Val422. Residues Glu423 to Pro445 are Cytoplasmic-facing. The chain crosses the membrane as a helical span at residues Ile446–Ile466. The Extracellular portion of the chain corresponds to Glu467–Asn502. Asn486 carries N-linked (GlcNAc...) asparagine glycosylation. The helical transmembrane segment at Pro503–Gly523 threads the bilayer. Over Thr524–Ile574 the chain is Cytoplasmic. A compositionally biased stretch (low complexity) spans Ile550–Glu568. Positions Ile550–Ile574 are disordered.

Belongs to the G-protein coupled receptor Fz/Smo family.

It localises to the membrane. The polypeptide is Frizzled and smoothened-like protein G (fslG) (Dictyostelium discoideum (Social amoeba)).